Consider the following 528-residue polypeptide: U3 small nucleolar RNA-associated protein 15 homolog (528 aa).

An N-acetylalanine modification is found at Ala2. 7 WD repeats span residues 36–75 (KEFG…PVKT), 78–117 (RFKD…PLRQ), 120–159 (GHTK…EILT), 162–202 (EHSD…NVLC), 204–242 (EHGQ…QLLV), 246–285 (NHHK…VVHS), and 287–326 (DYAA…KKES). A Glycyl lysine isopeptide (Lys-Gly) (interchain with G-Cter in SUMO2) cross-link involves residue Lys249. The disordered stretch occupies residues 508–528 (AELPEEKTESPRQPSDTDKNS). Positions 511–528 (PEEKTESPRQPSDTDKNS) are enriched in basic and acidic residues.

In terms of assembly, part of the small subunit (SSU) processome, composed of more than 70 proteins and the RNA chaperone small nucleolar RNA (snoRNA) U3. May be a component of the proposed t-UTP subcomplex of the ribosomal small subunit (SSU) processome containing at least UTP4, WDR43, HEATR1, UTP15, WDR75. Interacts directly with UTP4 and WDR43.

It is found in the nucleus. The protein resides in the nucleolus. In terms of biological role, ribosome biogenesis factor. Involved in nucleolar processing of pre-18S ribosomal RNA. Required for optimal pre-ribosomal RNA transcription by RNA polymerase I. Part of the small subunit (SSU) processome, first precursor of the small eukaryotic ribosomal subunit. During the assembly of the SSU processome in the nucleolus, many ribosome biogenesis factors, an RNA chaperone and ribosomal proteins associate with the nascent pre-rRNA and work in concert to generate RNA folding, modifications, rearrangements and cleavage as well as targeted degradation of pre-ribosomal RNA by the RNA exosome. This is U3 small nucleolar RNA-associated protein 15 homolog from Rattus norvegicus (Rat).